The chain runs to 445 residues: MSPESRKLLNIVILGVGFMFMFTAFQTSGNVAQTVISSLNSTSFHGSGYTSLAIIYSVFSASNLIAPSVIAVLGCQMSMFLSGLLYSAYIAMFIQPYTWSFYTLSVLIGIAAAVLWTAQGCCLTINSDERTIGRHSGIFWALLQFSMLFGNLYIYLAWKGEINISDTDRRTVFIALTVISLVGSVLFFLIRTPDSDSAQEDEASDSVADAEGSMSAQGCLSKAMDAFRKSLKLSITKEMLLLSILVAYTGLELTFYSGVYGTCIGSMNVFGTDAKSLIGLSGIFVGLGEVLGGGLFGLLGKNNYFGRNPVVILGVVVHFLAFYMIYLYMPSDAPIASRSGTDLSAFINPSKTLALACSFLLGLGDSCYNTQMLSILGSLYPDNSAPAFAVFKFVQSVSAAVAFFYSNYLLLHWQLLILVIFGFFGTISFFFVEWGLTQRSLYNSM.

The helical transmembrane segment at 8–28 (LLNIVILGVGFMFMFTAFQTS) threads the bilayer. Residue asparagine 40 is glycosylated (N-linked (GlcNAc...) asparagine). The next 4 membrane-spanning stretches (helical) occupy residues 52–72 (LAII…VIAV), 74–94 (GCQM…AMFI), 98–118 (TWSF…LWTA), and 138–158 (IFWA…YLAW). N-linked (GlcNAc...) asparagine glycosylation occurs at asparagine 163. Helical transmembrane passes span 170 to 190 (RTVF…FFLI), 239 to 259 (MLLL…YSGV), 277 to 297 (LIGL…GLFG), 309 to 329 (PVVI…YLYM), 343 to 363 (LSAF…LLGL), 385 to 405 (APAF…AFFY), and 415 to 435 (LLIL…VEWG).

The protein belongs to the unc-93 family.

Its subcellular location is the membrane. This Xenopus laevis (African clawed frog) protein is UNC93-like protein MFSD11 (mfsd11).